The sequence spans 651 residues: p-hydroxybenzoic acid efflux pump subunit AaeB (651 aa).

Transmembrane regions (helical) follow at residues 11-31 (FAFK…HLQL), 41-61 (AAIV…SGAI), 67-87 (LRII…VLTI), 91-111 (VLTL…SSLV), 119-139 (FGLA…TPLL), 150-170 (EIVL…PRSI), 368-388 (LFWL…IAVV), 405-425 (FLVG…FIIP), 429-449 (QSML…GIEV), 455-475 (GSLG…PMIF), and 481-501 (LDSA…LLLI).

The protein belongs to the aromatic acid exporter ArAE (TC 2.A.85) family.

Its subcellular location is the cell inner membrane. Forms an efflux pump with AaeA. Could function as a metabolic relief valve, allowing to eliminate certain compounds when they accumulate to high levels in the cell. The polypeptide is p-hydroxybenzoic acid efflux pump subunit AaeB (Yersinia pseudotuberculosis serotype O:1b (strain IP 31758)).